The following is a 221-amino-acid chain: Iron-sulfur cluster repair protein YtfE (221 aa).

This sequence belongs to the RIC family. YtfE subfamily. In terms of assembly, homodimer.

The protein localises to the cytoplasm. Di-iron-containing protein involved in the repair of iron-sulfur clusters damaged by oxidative and nitrosative stress conditions. This Cronobacter sakazakii (strain ATCC BAA-894) (Enterobacter sakazakii) protein is Iron-sulfur cluster repair protein YtfE.